A 492-amino-acid polypeptide reads, in one-letter code: NAD(P)H-quinone oxidoreductase subunit 2 A, chloroplastic (492 aa).

The next 13 membrane-spanning stretches (helical) occupy residues 6 to 26 (LLLF…GLIL), 39 to 59 (ISWF…ALLF), 81 to 101 (IFQF…VEYI), 106 to 126 (MAIT…MFLC), 131 to 151 (LITI…LSGY), 165 to 185 (YLLM…WLYG), 209 to 229 (PGIL…LSPA), 277 to 297 (WHLL…LIAI), 305 to 325 (MLAY…IVGD), 336 to 356 (YMLF…SFGL), 377 to 397 (ALSL…AGFF), 400 to 420 (LHLF…IGLL), and 464 to 484 (FSMI…NPII).

Belongs to the complex I subunit 2 family. In terms of assembly, NDH is composed of at least 16 different subunits, 5 of which are encoded in the nucleus.

It localises to the plastid. The protein resides in the chloroplast thylakoid membrane. It catalyses the reaction a plastoquinone + NADH + (n+1) H(+)(in) = a plastoquinol + NAD(+) + n H(+)(out). It carries out the reaction a plastoquinone + NADPH + (n+1) H(+)(in) = a plastoquinol + NADP(+) + n H(+)(out). Its function is as follows. NDH shuttles electrons from NAD(P)H:plastoquinone, via FMN and iron-sulfur (Fe-S) centers, to quinones in the photosynthetic chain and possibly in a chloroplast respiratory chain. The immediate electron acceptor for the enzyme in this species is believed to be plastoquinone. Couples the redox reaction to proton translocation, and thus conserves the redox energy in a proton gradient. This Phaseolus vulgaris (Kidney bean) protein is NAD(P)H-quinone oxidoreductase subunit 2 A, chloroplastic.